Consider the following 347-residue polypeptide: DNA damage tolerance protein RHC31 (347 aa).

Ser9 carries the post-translational modification Phosphoserine. Residue Lys35 forms a Glycyl lysine isopeptide (Lys-Gly) (interchain with G-Cter in SUMO) linkage.

Functionally, could be involved in a ubiquitin-related process important for DNA damage tolerance. This chain is DNA damage tolerance protein RHC31 (AOS1), found in Saccharomyces cerevisiae (strain ATCC 204508 / S288c) (Baker's yeast).